A 331-amino-acid polypeptide reads, in one-letter code: Fe-S cluster assembly protein DRE2 (331 aa).

The tract at residues 1–146 (MSEILLLLHP…MPTFKKPVSS (146 aa)) is N-terminal SAM-like domain. The interval 142 to 164 (KPVSSPVTLTDTSANNTDAEDDL) is disordered. The span at 146–158 (SPVTLTDTSANNT) shows a compositional bias: polar residues. The linker stretch occupies residues 147-202 (PVTLTDTSANNTDAEDDLSMKRKLDSTKLAYFSDDSSGEEDDLIDENELIADSHKF). Residues Cys212, Cys224, Cys227, and Cys229 each contribute to the [2Fe-2S] cluster site. The segment at 212–229 (CELPNGKKRKKACKDCTC) is fe-S binding site A. Residues Cys294, Cys297, Cys305, and Cys308 each contribute to the [4Fe-4S] cluster site. Short sequence motifs (cx2C motif) lie at residues 294–297 (CSSC) and 305–308 (CDGC). A fe-S binding site B region spans residues 294–308 (CSSCALGDAFRCDGC).

This sequence belongs to the anamorsin family. As to quaternary structure, monomer. Interacts with TAH18. Interacts with MIA40. It depends on [2Fe-2S] cluster as a cofactor. [4Fe-4S] cluster is required as a cofactor.

The protein localises to the cytoplasm. Its subcellular location is the mitochondrion intermembrane space. Its function is as follows. Component of the cytosolic iron-sulfur (Fe-S) protein assembly (CIA) machinery required for the maturation of extramitochondrial Fe-S proteins. Part of an electron transfer chain functioning in an early step of cytosolic Fe-S biogenesis, facilitating the de novo assembly of a [4Fe-4S] cluster on the scaffold complex CFD1-NBP35. Electrons are transferred to DRE2 from NADPH via the FAD- and FMN-containing protein TAH18. TAH18-DRE2 are also required for the assembly of the diferric tyrosyl radical cofactor of ribonucleotide reductase (RNR), probably by providing electrons for reduction during radical cofactor maturation in the catalytic small subunit RNR2. This Clavispora lusitaniae (strain ATCC 42720) (Yeast) protein is Fe-S cluster assembly protein DRE2.